The chain runs to 59 residues: UPF0434 protein Shew_1640 (59 aa).

This sequence belongs to the UPF0434 family.

The sequence is that of UPF0434 protein Shew_1640 from Shewanella loihica (strain ATCC BAA-1088 / PV-4).